The primary structure comprises 103 residues: Large ribosomal subunit protein uL24 (103 aa).

It belongs to the universal ribosomal protein uL24 family. Part of the 50S ribosomal subunit.

In terms of biological role, one of two assembly initiator proteins, it binds directly to the 5'-end of the 23S rRNA, where it nucleates assembly of the 50S subunit. Functionally, one of the proteins that surrounds the polypeptide exit tunnel on the outside of the subunit. The protein is Large ribosomal subunit protein uL24 of Syntrophomonas wolfei subsp. wolfei (strain DSM 2245B / Goettingen).